A 152-amino-acid chain; its full sequence is MLP-like protein 165 (152 aa).

Belongs to the MLP family.

The chain is MLP-like protein 165 (MLP165) from Arabidopsis thaliana (Mouse-ear cress).